Consider the following 891-residue polypeptide: Translation initiation factor IF-2 (891 aa).

Residues 50-303 (KKEHGSADES…TSMQHGFDKS (254 aa)) are disordered. Composition is skewed to basic and acidic residues over residues 102–237 (TLEE…KTAD) and 245–261 (HARE…EQQP). One can recognise a tr-type G domain in the interval 390–559 (GRAPVVTIMG…LLQSEVLELT (170 aa)). Positions 399–406 (GHVDHGKT) are G1. Residue 399–406 (GHVDHGKT) participates in GTP binding. A G2 region spans residues 424-428 (GITQH). The G3 stretch occupies residues 445-448 (DTPG). GTP-binding positions include 445-449 (DTPGH) and 499-502 (NKID). Residues 499-502 (NKID) form a G4 region. The interval 535–537 (SAK) is G5.

Belongs to the TRAFAC class translation factor GTPase superfamily. Classic translation factor GTPase family. IF-2 subfamily.

The protein resides in the cytoplasm. Its function is as follows. One of the essential components for the initiation of protein synthesis. Protects formylmethionyl-tRNA from spontaneous hydrolysis and promotes its binding to the 30S ribosomal subunits. Also involved in the hydrolysis of GTP during the formation of the 70S ribosomal complex. The chain is Translation initiation factor IF-2 from Aliivibrio salmonicida (strain LFI1238) (Vibrio salmonicida (strain LFI1238)).